Consider the following 179-residue polypeptide: ATP synthase subunit delta (179 aa).

The protein belongs to the ATPase delta chain family. F-type ATPases have 2 components, F(1) - the catalytic core - and F(0) - the membrane proton channel. F(1) has five subunits: alpha(3), beta(3), gamma(1), delta(1), epsilon(1). F(0) has three main subunits: a(1), b(2) and c(10-14). The alpha and beta chains form an alternating ring which encloses part of the gamma chain. F(1) is attached to F(0) by a central stalk formed by the gamma and epsilon chains, while a peripheral stalk is formed by the delta and b chains.

The protein resides in the cell membrane. Functionally, f(1)F(0) ATP synthase produces ATP from ADP in the presence of a proton or sodium gradient. F-type ATPases consist of two structural domains, F(1) containing the extramembraneous catalytic core and F(0) containing the membrane proton channel, linked together by a central stalk and a peripheral stalk. During catalysis, ATP synthesis in the catalytic domain of F(1) is coupled via a rotary mechanism of the central stalk subunits to proton translocation. Its function is as follows. This protein is part of the stalk that links CF(0) to CF(1). It either transmits conformational changes from CF(0) to CF(1) or is implicated in proton conduction. The protein is ATP synthase subunit delta of Natranaerobius thermophilus (strain ATCC BAA-1301 / DSM 18059 / JW/NM-WN-LF).